A 173-amino-acid polypeptide reads, in one-letter code: Translation initiation factor IF-3 (173 aa).

This sequence belongs to the IF-3 family. As to quaternary structure, monomer.

It is found in the cytoplasm. Functionally, IF-3 binds to the 30S ribosomal subunit and shifts the equilibrium between 70S ribosomes and their 50S and 30S subunits in favor of the free subunits, thus enhancing the availability of 30S subunits on which protein synthesis initiation begins. The polypeptide is Translation initiation factor IF-3 (Caulobacter vibrioides (strain ATCC 19089 / CIP 103742 / CB 15) (Caulobacter crescentus)).